Reading from the N-terminus, the 308-residue chain is Ribosomal protein L11 methyltransferase (308 aa).

S-adenosyl-L-methionine-binding residues include Thr160, Gly181, Asp203, and Asn245.

The protein belongs to the methyltransferase superfamily. PrmA family.

It localises to the cytoplasm. It catalyses the reaction L-lysyl-[protein] + 3 S-adenosyl-L-methionine = N(6),N(6),N(6)-trimethyl-L-lysyl-[protein] + 3 S-adenosyl-L-homocysteine + 3 H(+). In terms of biological role, methylates ribosomal protein L11. This chain is Ribosomal protein L11 methyltransferase, found in Thermoanaerobacter sp. (strain X514).